Reading from the N-terminus, the 346-residue chain is Protein RecA (346 aa).

Residue 79–86 coordinates ATP; it reads GPESSGKT.

Belongs to the RecA family.

It localises to the cytoplasm. Functionally, can catalyze the hydrolysis of ATP in the presence of single-stranded DNA, the ATP-dependent uptake of single-stranded DNA by duplex DNA, and the ATP-dependent hybridization of homologous single-stranded DNAs. It interacts with LexA causing its activation and leading to its autocatalytic cleavage. The sequence is that of Protein RecA from Chlorobaculum tepidum (strain ATCC 49652 / DSM 12025 / NBRC 103806 / TLS) (Chlorobium tepidum).